A 179-amino-acid chain; its full sequence is Embryo-specific protein ATS3A (179 aa).

An N-terminal signal peptide occupies residues 1–22 (MLRLAIPLFLFALCSFTLFSSA). Residues 48–158 (CSYTVIIKTS…NSVWYGFNVC (111 aa)) form the PLAT domain.

As to quaternary structure, interacts with EULS3 (via N-terminus). In terms of tissue distribution, expressed in roots, rosette leaves, stems, cauline leaves and flowers.

The protein localises to the secreted. May play a role during embryo development. This Arabidopsis thaliana (Mouse-ear cress) protein is Embryo-specific protein ATS3A.